The sequence spans 214 residues: Coiled-coil domain-containing protein 169 (214 aa).

Residues 30 to 144 (EMLQMSTFEL…IEQEAKAYYK (115 aa)) are a coiled coil. Residues 161-214 (VTQEAAKKQQSDPAHATREKPAFKAKYNGLAKRRTMTKRRGGMTKGSHPSNMKH) are disordered. Residues 165–182 (AAKKQQSDPAHATREKPA) show a composition bias toward basic and acidic residues. The span at 191–202 (AKRRTMTKRRGG) shows a compositional bias: basic residues.

This sequence belongs to the CCDC169 family.

This is Coiled-coil domain-containing protein 169 (ccdc169) from Xenopus laevis (African clawed frog).